The primary structure comprises 338 residues: SPbeta prophage-derived uncharacterized protein YonB (338 aa).

The polypeptide is SPbeta prophage-derived uncharacterized protein YonB (yonB) (Bacillus subtilis (strain 168)).